The primary structure comprises 135 residues: Transcription antitermination protein NusB (135 aa).

It belongs to the NusB family.

In terms of biological role, involved in transcription antitermination. Required for transcription of ribosomal RNA (rRNA) genes. Binds specifically to the boxA antiterminator sequence of the ribosomal RNA (rrn) operons. This is Transcription antitermination protein NusB from Clostridium perfringens (strain ATCC 13124 / DSM 756 / JCM 1290 / NCIMB 6125 / NCTC 8237 / Type A).